The sequence spans 737 residues: Catalase-peroxidase (737 aa).

The first 23 residues, 1-23 (MLKKILPVLITLAIVHNTPTAWA), serve as a signal peptide directing secretion. The segment at residues 102 to 223 (WHGAGTYRIY…LAATQMGLIY (122 aa)) is a cross-link (tryptophyl-tyrosyl-methioninium (Trp-Tyr) (with M-249)). Residue His-103 is the Proton acceptor of the active site. Residues 223 to 249 (YVNPEGPNGKPDPVAAAKDIREAFARM) constitute a cross-link (tryptophyl-tyrosyl-methioninium (Tyr-Met) (with W-102)). A heme b-binding site is contributed by His-264.

This sequence belongs to the peroxidase family. Peroxidase/catalase subfamily. Homodimer or homotetramer. The cofactor is heme b. Post-translationally, formation of the three residue Trp-Tyr-Met cross-link is important for the catalase, but not the peroxidase activity of the enzyme.

It catalyses the reaction H2O2 + AH2 = A + 2 H2O. The enzyme catalyses 2 H2O2 = O2 + 2 H2O. Its function is as follows. Bifunctional enzyme with both catalase and broad-spectrum peroxidase activity. The sequence is that of Catalase-peroxidase from Yersinia pseudotuberculosis serotype I (strain IP32953).